A 313-amino-acid polypeptide reads, in one-letter code: Aspartate carbamoyltransferase catalytic subunit (313 aa).

Residues Arg-58 and Thr-59 each contribute to the carbamoyl phosphate site. Lys-86 lines the L-aspartate pocket. Arg-108, His-136, and Gln-139 together coordinate carbamoyl phosphate. L-aspartate is bound by residues Arg-169 and Arg-223. Gly-264 and Pro-265 together coordinate carbamoyl phosphate.

This sequence belongs to the aspartate/ornithine carbamoyltransferase superfamily. ATCase family. Heterododecamer (2C3:3R2) of six catalytic PyrB chains organized as two trimers (C3), and six regulatory PyrI chains organized as three dimers (R2).

It catalyses the reaction carbamoyl phosphate + L-aspartate = N-carbamoyl-L-aspartate + phosphate + H(+). The protein operates within pyrimidine metabolism; UMP biosynthesis via de novo pathway; (S)-dihydroorotate from bicarbonate: step 2/3. In terms of biological role, catalyzes the condensation of carbamoyl phosphate and aspartate to form carbamoyl aspartate and inorganic phosphate, the committed step in the de novo pyrimidine nucleotide biosynthesis pathway. The chain is Aspartate carbamoyltransferase catalytic subunit from Chlorobium luteolum (strain DSM 273 / BCRC 81028 / 2530) (Pelodictyon luteolum).